A 399-amino-acid polypeptide reads, in one-letter code: Subtilisin-like protease 1 (399 aa).

An N-terminal signal peptide occupies residues 1–19 (MGVFRFISISLAAVSAANA). Positions 20–116 (AQILSMPHAQ…VEPDTIISVH (97 aa)) are excised as a propeptide. The Inhibitor I9 domain occupies 34 to 115 (SYIVMMKDDT…FVEPDTIISV (82 aa)). In terms of domain architecture, Peptidase S8 spans 126 to 399 (SWGLARISNP…TNVLINNGGA (274 aa)). Residues Asp158 and His190 each act as charge relay system in the active site. Residues 175–198 (GSNQVNDGDDRDGSGHGTHTSGTM) form a disordered region. The N-linked (GlcNAc...) asparagine glycan is linked to Asn251. Over residues 282-294 (NDNQDAQSSSPAS) the composition is skewed to polar residues. Residues 282 to 312 (NDNQDAQSSSPASEPSVCTVGSSAEDDSRSS) form a disordered region. Ser345 acts as the Charge relay system in catalysis.

Belongs to the peptidase S8 family.

It localises to the secreted. Functionally, secreted subtilisin-like serine protease with keratinolytic activity that contributes to pathogenicity. This chain is Subtilisin-like protease 1 (SUB1), found in Arthroderma benhamiae (Trichophyton mentagrophytes).